Consider the following 509-residue polypeptide: Glycogen synthase (509 aa).

Lys-47 contacts ADP-alpha-D-glucose.

This sequence belongs to the glycosyltransferase 1 family. Bacterial/plant glycogen synthase subfamily.

The catalysed reaction is [(1-&gt;4)-alpha-D-glucosyl](n) + ADP-alpha-D-glucose = [(1-&gt;4)-alpha-D-glucosyl](n+1) + ADP + H(+). The protein operates within glycan biosynthesis; glycogen biosynthesis. Synthesizes alpha-1,4-glucan chains using ADP-glucose. The sequence is that of Glycogen synthase from Xanthomonas oryzae pv. oryzae (strain PXO99A).